Here is a 559-residue protein sequence, read N- to C-terminus: Podocan-like protein 1 (559 aa).

An N-terminal signal peptide occupies residues 1-20; it reads MRPQELLLLLLMLKWSLAHT. Residue Asn64 is glycosylated (N-linked (GlcNAc...) asparagine). 20 LRR repeats span residues 66 to 89, 90 to 115, 117 to 139, 140 to 160, 161 to 186, 188 to 208, 209 to 231, 233 to 257, 258 to 281, 283 to 302, 303 to 328, 329 to 352, 354 to 373, 374 to 399, 400 to 423, 425 to 444, 445 to 470, 471 to 494, 496 to 515, and 517 to 541; these read TRAA…ELSR, LSGL…AFES, NQLE…LPRS, LRVA…TFGE, KPAL…TFHG, EVIT…PSLP, ASLE…ALSL, THLR…TFSK, LSSL…LPGT, TILH…RLHK, ARGL…TLRP, LRAL…LPRH, QALV…DLVS, ARAL…AFRR, LRAL…LPAS, RSLR…QLAG, LNKL…TWHE, LQAL…LPEA, EELY…AFLS, and PHLR…ALQG.

The protein belongs to the small leucine-rich proteoglycan (SLRP) family. SLRP class V subfamily. In terms of processing, N-glycosylated. Detected in bone where it is expressed in osteoblasts and newly formed bone matrix (at protein level). Also expressed weakly in osteoclasts (at protein level). Expressed strongly in calvaria, lung and femur, and weakly in kidney.

It localises to the secreted. Its subcellular location is the extracellular space. It is found in the extracellular matrix. The sequence is that of Podocan-like protein 1 from Mus musculus (Mouse).